Reading from the N-terminus, the 469-residue chain is DNA-binding transcriptional regulator NtrC (469 aa).

Residues 5-119 (IVWVVDDDSS…EAVALVERAI (115 aa)) enclose the Response regulatory domain. The residue at position 54 (Asp-54) is a 4-aspartylphosphate. Positions 140 to 369 (MIGEAPAMQD…LENTCRWLTV (230 aa)) constitute a Sigma-54 factor interaction domain. Residues 168-175 (GESGTGKE) and 231-240 (ADGGTLFLDE) each bind ATP. The H-T-H motif DNA-binding region spans 445 to 464 (KQEAARLLGWGRNTLTRKLK).

Post-translationally, phosphorylated and dephosphorylated by NtrB.

Its subcellular location is the cytoplasm. Its function is as follows. Member of the two-component regulatory system NtrB/NtrC, which controls expression of the nitrogen-regulated (ntr) genes in response to nitrogen limitation. Phosphorylated NtrC binds directly to DNA and stimulates the formation of open promoter-sigma54-RNA polymerase complexes. This is DNA-binding transcriptional regulator NtrC (glnG) from Salmonella typhimurium (strain LT2 / SGSC1412 / ATCC 700720).